Reading from the N-terminus, the 239-residue chain is Orotidine 5'-phosphate decarboxylase (239 aa).

Substrate contacts are provided by residues D15, K36, 63-72, T127, R189, Q198, G218, and R219; that span reads DLKFHDIPNT. The Proton donor role is filled by K65.

It belongs to the OMP decarboxylase family. Type 1 subfamily. In terms of assembly, homodimer.

The enzyme catalyses orotidine 5'-phosphate + H(+) = UMP + CO2. It participates in pyrimidine metabolism; UMP biosynthesis via de novo pathway; UMP from orotate: step 2/2. Functionally, catalyzes the decarboxylation of orotidine 5'-monophosphate (OMP) to uridine 5'-monophosphate (UMP). This chain is Orotidine 5'-phosphate decarboxylase, found in Prochlorococcus marinus subsp. pastoris (strain CCMP1986 / NIES-2087 / MED4).